Consider the following 413-residue polypeptide: METVPPSPITWPDGGALTNDWVHGLMSCFEWSSWNLPPSQLPSLLPVNVFDSLVLTAHKILHKERNCVHIDDLDSVSNVVVVGDIHGQLHDLLFLLKDTGFPCQNRCYVFNGDYVDRGAWGLETFLVLLSWKVLMPDRVYLLRGNHESKYCTSMYGFEKEVLTKYGDKGKHVYRKCLGCFEGLPLASIISGRVYTAHGGLFRSPVLPKRTTRGKKNRRVVLLEPEPSSMKLGTLDELMQARRSVLDPPWEGSNLIPGDVLWSDPSMTPGLSPNEQRGIGLLWGPDCTEDFLKKYELKLIIRSHEGPDAREKRTGLGGMDNGYTIDHNVESGKLITIFSAPDYPQFQATEERYKNKGAYIILQAPDFSDPQFHSFEAVKPRPKAHPYYDFENVIDSDDEMDKSAMDTNNEQPNS.

The cysteines at positions 28 and 67 are disulfide-linked. Mn(2+) contacts are provided by aspartate 84, histidine 86, aspartate 113, and asparagine 145. Histidine 146 serves as the catalytic Proton donor. Residues histidine 197 and histidine 303 each contribute to the Mn(2+) site. The disordered stretch occupies residues 391-413; the sequence is NVIDSDDEMDKSAMDTNNEQPNS. The span at 404 to 413 shows a compositional bias: polar residues; it reads MDTNNEQPNS.

Belongs to the PPP phosphatase family. PP-7 subfamily. As to quaternary structure, monomer, homodimer, and heteromer. Interacts with calmodulin (CaM3 and CaM4) and HSFA1A/HSF1. The cofactor is Mn(2+). In terms of tissue distribution, expressed in leaves, and, to a lower extent, in stems and flowers.

The protein localises to the nucleus. Its subcellular location is the nucleoplasm. The enzyme catalyses O-phospho-L-seryl-[protein] + H2O = L-seryl-[protein] + phosphate. It catalyses the reaction O-phospho-L-threonyl-[protein] + H2O = L-threonyl-[protein] + phosphate. Its activity is regulated as follows. Inhibited by NaF and orthovanadate, as well as by divalent cations such as Ni(2+) and Zn(2+). Inhibited by polylysine with myelin basic protein as substrate, but activated by polylysine with pNPP as substrate. Reversibly regulated by redox agents. Inhibited by submillimolar Pi concentrations. Slightly repressed by calmodulin (CaM). Functionally, phosphatase active on para-nitrophenylphosphate (pNPP) and on various phosphoproteins such as myelin basic protein. Seems to act as a positive regulator of cryptochrome signaling involved in hypocotyl growth inhibition and cotyledon expansion under white and blue light conditions. Confers thermotolerance. Required for heat shock mediated-signaling pathway that leads to the expression of heat shock proteins (HSPs). This is Serine/threonine-protein phosphatase 7 (PP7) from Arabidopsis thaliana (Mouse-ear cress).